We begin with the raw amino-acid sequence, 189 residues long: Small ribosomal subunit protein uS4 (189 aa).

In terms of domain architecture, S4 RNA-binding spans 107 to 178 (RRLQTQVFKL…AGRVKRKNQG (72 aa)). The interval 160-189 (HNSPYGGGRAGRVKRKNQGKGGEEGAEEEE) is disordered.

Belongs to the universal ribosomal protein uS4 family. In terms of assembly, component of the small ribosomal subunit. Mature ribosomes consist of a small (40S) and a large (60S) subunit. The 40S subunit contains about 32 different proteins and 1 molecule of RNA (18S). The 60S subunit contains 45 different proteins and 3 molecules of RNA (25S, 5.8S and 5S).

Its subcellular location is the cytoplasm. Component of the ribosome, a large ribonucleoprotein complex responsible for the synthesis of proteins in the cell. The small ribosomal subunit (SSU) binds messenger RNAs (mRNAs) and translates the encoded message by selecting cognate aminoacyl-transfer RNA (tRNA) molecules. The large subunit (LSU) contains the ribosomal catalytic site termed the peptidyl transferase center (PTC), which catalyzes the formation of peptide bonds, thereby polymerizing the amino acids delivered by tRNAs into a polypeptide chain. The nascent polypeptides leave the ribosome through a tunnel in the LSU and interact with protein factors that function in enzymatic processing, targeting, and the membrane insertion of nascent chains at the exit of the ribosomal tunnel. RPS9B is involved in nucleolar processing of pre-18S ribosomal RNA and ribosome assembly. This chain is Small ribosomal subunit protein uS4 (RPS9B), found in Candida albicans (strain SC5314 / ATCC MYA-2876) (Yeast).